The primary structure comprises 420 residues: MTMIFDKGNVEDFDKELWDAIHAEEERQEHHIELIASENMVSKAVMAAQGSVLTNKYAEGYPGNRYYGGTECVDIVETLAIERAKKLFGAAFANVQAHSGSQANAAAYMALIEAGDTVLGMDLAAGGHLTHGSPVNFSGKTYHFVGYSVDADTEMLNYEAILEQAKAVQPKLIVAGASAYSRSIDFEKFRAIADHVGAYLMVDMAHIAGLVAAGVHPSPVHYAHIVTSTTHKTLRGPRGGLILTNDEALAKKINSAVFPGLQGGPLEHVIAAKAVAFKEALDPAFKDYAQAIIDNTAAMAAVFAQDDRFRLISGGTDNHVFLVDVTKVIANGKLAQNLLDEVNITLNKNAIPFETLSPFKTSGIRIGCAAITSRGMGVKESQTIAHLIIKALVNHDQETILEEVRQEVRQLTDAFPLYKK.

(6S)-5,6,7,8-tetrahydrofolate contacts are provided by residues L123 and 127–129 (GHL). Position 232 is an N6-(pyridoxal phosphate)lysine (K232). A (6S)-5,6,7,8-tetrahydrofolate-binding site is contributed by 357–359 (SPF).

Belongs to the SHMT family. As to quaternary structure, homodimer. It depends on pyridoxal 5'-phosphate as a cofactor.

It localises to the cytoplasm. The catalysed reaction is (6R)-5,10-methylene-5,6,7,8-tetrahydrofolate + glycine + H2O = (6S)-5,6,7,8-tetrahydrofolate + L-serine. It functions in the pathway one-carbon metabolism; tetrahydrofolate interconversion. It participates in amino-acid biosynthesis; glycine biosynthesis; glycine from L-serine: step 1/1. Catalyzes the reversible interconversion of serine and glycine with tetrahydrofolate (THF) serving as the one-carbon carrier. This reaction serves as the major source of one-carbon groups required for the biosynthesis of purines, thymidylate, methionine, and other important biomolecules. Also exhibits THF-independent aldolase activity toward beta-hydroxyamino acids, producing glycine and aldehydes, via a retro-aldol mechanism. In Streptococcus pyogenes serotype M12 (strain MGAS2096), this protein is Serine hydroxymethyltransferase.